The sequence spans 285 residues: ATP phosphoribosyltransferase (285 aa).

This sequence belongs to the ATP phosphoribosyltransferase family. Long subfamily. Mg(2+) is required as a cofactor.

The protein localises to the cytoplasm. It carries out the reaction 1-(5-phospho-beta-D-ribosyl)-ATP + diphosphate = 5-phospho-alpha-D-ribose 1-diphosphate + ATP. It participates in amino-acid biosynthesis; L-histidine biosynthesis; L-histidine from 5-phospho-alpha-D-ribose 1-diphosphate: step 1/9. Its activity is regulated as follows. Feedback inhibited by histidine. In terms of biological role, catalyzes the condensation of ATP and 5-phosphoribose 1-diphosphate to form N'-(5'-phosphoribosyl)-ATP (PR-ATP). Has a crucial role in the pathway because the rate of histidine biosynthesis seems to be controlled primarily by regulation of HisG enzymatic activity. This is ATP phosphoribosyltransferase from Streptomyces coelicolor (strain ATCC BAA-471 / A3(2) / M145).